Reading from the N-terminus, the 154-residue chain is 3-hydroxyacyl-[acyl-carrier-protein] dehydratase FabZ (154 aa).

Residue H55 is part of the active site.

The protein belongs to the thioester dehydratase family. FabZ subfamily.

The protein resides in the cytoplasm. The catalysed reaction is a (3R)-hydroxyacyl-[ACP] = a (2E)-enoyl-[ACP] + H2O. Functionally, involved in unsaturated fatty acids biosynthesis. Catalyzes the dehydration of short chain beta-hydroxyacyl-ACPs and long chain saturated and unsaturated beta-hydroxyacyl-ACPs. The polypeptide is 3-hydroxyacyl-[acyl-carrier-protein] dehydratase FabZ (Oleidesulfovibrio alaskensis (strain ATCC BAA-1058 / DSM 17464 / G20) (Desulfovibrio alaskensis)).